Consider the following 163-residue polypeptide: uncharacterized protein (163 aa).

Helical transmembrane passes span 19–39, 63–83, 87–107, and 119–139; these read GPPSVICIRLLVGLVFLSEGI, FFADLDGVVEIVCGTLVLLGL, VAAVPLLIDMVGAIVLTKLRA, and FWGMAHAARTDLSMLLGLIFL.

This sequence belongs to the DoxX family.

It is found in the cell membrane. This is an uncharacterized protein from Mycobacterium tuberculosis (strain ATCC 25618 / H37Rv).